We begin with the raw amino-acid sequence, 678 residues long: UvrABC system protein C (678 aa).

Residues 1-13 (MKKNISYGKHKTF) are compositionally biased toward basic residues. Residues 1-25 (MKKNISYGKHKTFPSKLNGLEKQHS) are disordered. The 79-residue stretch at 69–147 (HKPGVYRMFD…IKRLHPRFNV (79 aa)) folds into the GIY-YIG domain. Residues 257–292 (QSVKNDMIQAMHKAAEDLDFEQAAVYRDRLSALSHI) form the UVR domain.

Belongs to the UvrC family. In terms of assembly, interacts with UvrB in an incision complex.

The protein localises to the cytoplasm. The UvrABC repair system catalyzes the recognition and processing of DNA lesions. UvrC both incises the 5' and 3' sides of the lesion. The N-terminal half is responsible for the 3' incision and the C-terminal half is responsible for the 5' incision. This is UvrABC system protein C from Bartonella quintana (strain Toulouse) (Rochalimaea quintana).